A 142-amino-acid polypeptide reads, in one-letter code: Small heat shock protein IbpB (142 aa).

In terms of domain architecture, sHSP spans 26-137 (SGESQSFPPY…APQRIAINER (112 aa)).

It belongs to the small heat shock protein (HSP20) family. In terms of assembly, homodimer. Forms homomultimers of about 100-150 subunits at optimal growth temperatures. Conformation changes to oligomers at high temperatures or high ionic concentrations. The decrease in size of the multimers is accompanied by an increase in chaperone activity.

It is found in the cytoplasm. Functionally, associates with aggregated proteins, together with IbpA, to stabilize and protect them from irreversible denaturation and extensive proteolysis during heat shock and oxidative stress. Aggregated proteins bound to the IbpAB complex are more efficiently refolded and reactivated by the ATP-dependent chaperone systems ClpB and DnaK/DnaJ/GrpE. Its activity is ATP-independent. The sequence is that of Small heat shock protein IbpB from Salmonella newport (strain SL254).